The chain runs to 170 residues: Cyclic dof factor 4 (170 aa).

The segment at N25 to E51 is disordered. Residues I58–P112 form a Dof-type zinc finger. Positions 60, 63, 85, and 88 each coordinate Zn(2+).

Expressed in the vasculature of cotyledons and hypocotyls, leaves and roots.

It localises to the nucleus. Functionally, transcription factor that binds specifically to a 5'-AA[AG]G-3' consensus core sequence. Transcriptional repressor of 'CONSTANS' expression. Regulates a photoperiodic flowering response. The polypeptide is Cyclic dof factor 4 (CDF4) (Arabidopsis thaliana (Mouse-ear cress)).